The following is a 138-amino-acid chain: Large ribosomal subunit protein bL17 (138 aa).

It belongs to the bacterial ribosomal protein bL17 family. As to quaternary structure, part of the 50S ribosomal subunit. Contacts protein L32.

In Buchnera aphidicola subsp. Schizaphis graminum (strain Sg), this protein is Large ribosomal subunit protein bL17.